A 336-amino-acid polypeptide reads, in one-letter code: PHD finger protein 11 (336 aa).

Residues 1 to 20 (MAEETAPPCGPVSTGGSLSP) form a disordered region. The C2HC pre-PHD-type zinc-finger motif lies at 25-61 (KRTCALCPDGHEWSVIYFAPSANIAAHENCLLYSSGL). The PHD-type zinc-finger motif lies at 91–143 (LKCSLCNKGGATVGCDLSSCRKSYHYVCAKKDHAIPQVDEDLGTYKIFCPEHP). Disordered stretches follow at residues 139–179 (CPEH…KKMK) and 303–336 (DPSG…GDSL). Low complexity predominate over residues 303–314 (DPSGSTSGSLLP).

In terms of assembly, interacts with BRCA1 and RELA.

The protein resides in the nucleus. Functionally, positive regulator of Th1-type cytokine gene expression. This is PHD finger protein 11 (Phf11) from Rattus norvegicus (Rat).